We begin with the raw amino-acid sequence, 479 residues long: Type I inositol polyphosphate 5-phosphatase 8 (479 aa).

2 catalytic regions span residues 300-315 (DKVI…LRAS) and 379-394 (KRRT…WKGD).

The protein belongs to the inositol polyphosphate 5-phosphatase family.

This Arabidopsis thaliana (Mouse-ear cress) protein is Type I inositol polyphosphate 5-phosphatase 8.